A 158-amino-acid polypeptide reads, in one-letter code: Immunoglobulin J chain (158 aa).

An N-terminal signal peptide occupies residues 1-22; the sequence is MKNHLFFWGVLAIFVQAVLVTA. 3 disulfide bridges follow: Cys36-Cys122, Cys95-Cys115, and Cys130-Cys155. The N-linked (GlcNAc...) (complex) asparagine glycan is linked to Asn72.

Part of the secretory IgA (sIgA) complex that consists of two, four or five IgA monomers, and two additional non-Ig polypeptides, namely the JCHAIN and the secretory component (the proteolytic product of PIGR). Part of the secretory IgM (sIgM) complex that consist of five IgM monomers, and two additional non-Ig polypeptides, namely the JCHAIN and the secretory component (the proteolytic product of PIGR). JCHAIN-containing IgM interacts (via CH4 domain) with FCRM (via Ig-like domain). In terms of processing, N-glycosylated. N-glycans attached to Asn-72 varies from truncated, differentially fucosylated to sialylated (NeuGc) complex types: Man3GlcNAc2; GlcNAc2Man3GlcNAc2(Fuc); Gal1GlcNAc1Man3GlcNAc2; GlcNAc2Man3GlcNAc2; GlcNAc1Man3GlcNAc2; GlcNAc1Man2GlcNAc2 and NeuGc1Gal1GlcNAc2Man3GlcNAc2.

It localises to the secreted. In terms of biological role, serves to link two monomer units of either IgM or IgA. In the case of IgM, the J chain-joined dimer is a nucleating unit for the IgM pentamer, and in the case of IgA it induces dimers and/or larger polymers. It also helps to bind these immunoglobulins to secretory component. This is Immunoglobulin J chain (JCHAIN) from Equus asinus (Donkey).